The sequence spans 316 residues: uncharacterized protein (316 aa).

The interval 1–34 (MATKRKIGDGYSSSDDNQPKRERSEGGEDQQLVP) is disordered. Basic and acidic residues predominate over residues 17–26 (NQPKRERSEG).

This is an uncharacterized protein from Lepidoptera (butterflies and moths).